A 260-amino-acid chain; its full sequence is tRNA pseudouridine synthase C (260 aa).

Residue D54 is part of the active site.

This sequence belongs to the pseudouridine synthase RluA family.

The enzyme catalyses uridine(65) in tRNA = pseudouridine(65) in tRNA. Responsible for synthesis of pseudouridine from uracil-65 in transfer RNAs. The sequence is that of tRNA pseudouridine synthase C (truC) from Escherichia coli (strain K12).